Consider the following 369-residue polypeptide: Mitogen-activated protein kinase 5 (369 aa).

The region spanning 36-322 is the Protein kinase domain; that stretch reads QPPIMPIGRG…VEEALDHPYL (287 aa). ATP is bound by residues 42–50 and Lys-65; that span reads IGRGAYGIV. Residue Asp-162 is the Proton acceptor of the active site. At Thr-194 the chain carries Phosphothreonine. Positions 194 to 196 match the TXY motif; the sequence is TEY. Phosphotyrosine is present on Tyr-196.

This sequence belongs to the protein kinase superfamily. CMGC Ser/Thr protein kinase family. MAP kinase subfamily. As to quaternary structure, interacts with MKK1. Post-translationally, dually phosphorylated on Thr-194 and Tyr-196, which activates the enzyme.

The catalysed reaction is L-seryl-[protein] + ATP = O-phospho-L-seryl-[protein] + ADP + H(+). The enzyme catalyses L-threonyl-[protein] + ATP = O-phospho-L-threonyl-[protein] + ADP + H(+). Its activity is regulated as follows. Activated by threonine and tyrosine phosphorylation. Functionally, involved in disease resistance and abiotic stress tolerance signaling pathways. In Oryza sativa subsp. indica (Rice), this protein is Mitogen-activated protein kinase 5 (MPK5).